The sequence spans 152 residues: Superoxide dismutase [Cu-Zn] 4AP (152 aa).

Cu cation-binding residues include His45, His47, and His62. The cysteines at positions 56 and 145 are disulfide-linked. Positions 62, 70, 79, and 82 each coordinate Zn(2+). Residue His119 coordinates Cu cation.

Belongs to the Cu-Zn superoxide dismutase family. In terms of assembly, homodimer. It depends on Cu cation as a cofactor. The cofactor is Zn(2+).

It is found in the cytoplasm. It carries out the reaction 2 superoxide + 2 H(+) = H2O2 + O2. In terms of biological role, destroys radicals which are normally produced within the cells and which are toxic to biological systems. The sequence is that of Superoxide dismutase [Cu-Zn] 4AP (SODCC.2) from Zea mays (Maize).